Here is a 343-residue protein sequence, read N- to C-terminus: Replication initiation protein (343 aa).

The segment at 42–61 (ERKRTKRRRGEHSTKPKCEN) is disordered.

Functionally, probably functions as an initiator for the IncI1 ColIb-P9 replicon. This chain is Replication initiation protein (repZ), found in Escherichia coli.